The following is a 937-amino-acid chain: Coiled-coil domain-containing protein 39 (937 aa).

4 coiled-coil regions span residues 16–137, 165–339, 365–615, and 664–816; these read AIPV…CQMN, QQDD…KKDI, EKTL…SQIR, and VIKA…LKQT. A disordered region spans residues 866 to 937; the sequence is LPTARGPSSR…NIPKEKKLSK (72 aa). A compositionally biased stretch (low complexity) spans 873 to 887; sequence SSRSSSQSSSLSSFR. Phosphoserine is present on residues Ser-888 and Ser-896. Residues 915 to 928 show a composition bias toward low complexity; the sequence is NDSSRSASSGSNSN.

Belongs to the CCDC39 family. Strongly expressed in tissues rich in ciliated cells. Expressed in olfactory and vomeronasal sensory neurons and the respiratory epithelium. Expressed in node cells carrying motile cilia, in upper and lower airways, and in ependymal and choroid plexus cells.

It is found in the cytoplasm. The protein resides in the cytoskeleton. Its subcellular location is the cilium axoneme. In terms of biological role, required for assembly of dynein regulatory complex (DRC) and inner dynein arm (IDA) complexes, which are responsible for ciliary beat regulation, thereby playing a central role in motility in cilia and flagella. Probably acts together with CCDC40 to form a molecular ruler that determines the 96 nanometer (nm) repeat length and arrangements of components in cilia and flagella. Not required for outer dynein arm complexes assembly. The polypeptide is Coiled-coil domain-containing protein 39 (Mus musculus (Mouse)).